The sequence spans 96 residues: Small ribosomal subunit protein bS6 (96 aa).

The protein belongs to the bacterial ribosomal protein bS6 family.

Binds together with bS18 to 16S ribosomal RNA. The sequence is that of Small ribosomal subunit protein bS6 from Streptococcus gordonii (strain Challis / ATCC 35105 / BCRC 15272 / CH1 / DL1 / V288).